The chain runs to 345 residues: Uroporphyrinogen decarboxylase (345 aa).

Substrate contacts are provided by residues 26–30, Asp-76, Tyr-151, Ser-205, and His-321; that span reads RQAGR.

The protein belongs to the uroporphyrinogen decarboxylase family. As to quaternary structure, homodimer.

It localises to the cytoplasm. It catalyses the reaction uroporphyrinogen III + 4 H(+) = coproporphyrinogen III + 4 CO2. It participates in porphyrin-containing compound metabolism; protoporphyrin-IX biosynthesis; coproporphyrinogen-III from 5-aminolevulinate: step 4/4. Its function is as follows. Catalyzes the decarboxylation of four acetate groups of uroporphyrinogen-III to yield coproporphyrinogen-III. The polypeptide is Uroporphyrinogen decarboxylase (Phenylobacterium zucineum (strain HLK1)).